Here is a 349-residue protein sequence, read N- to C-terminus: Phenylalanine--tRNA ligase alpha subunit (349 aa).

E258 contacts Mg(2+).

The protein belongs to the class-II aminoacyl-tRNA synthetase family. Phe-tRNA synthetase alpha subunit type 1 subfamily. In terms of assembly, tetramer of two alpha and two beta subunits. The cofactor is Mg(2+).

The protein localises to the cytoplasm. The enzyme catalyses tRNA(Phe) + L-phenylalanine + ATP = L-phenylalanyl-tRNA(Phe) + AMP + diphosphate + H(+). The polypeptide is Phenylalanine--tRNA ligase alpha subunit (Rickettsia rickettsii (strain Sheila Smith)).